A 301-amino-acid chain; its full sequence is Probable alpha-L-glutamate ligase (301 aa).

In terms of domain architecture, ATP-grasp spans Leu-104 to Glu-287. Residues Lys-141, Glu-178–Tyr-179, Asp-187, and Arg-211–Asn-213 contribute to the ATP site. The Mg(2+) site is built by Asp-248, Glu-260, and Asn-262. Mn(2+) contacts are provided by Asp-248, Glu-260, and Asn-262.

Belongs to the RimK family. Requires Mg(2+) as cofactor. The cofactor is Mn(2+).

The chain is Probable alpha-L-glutamate ligase from Pseudomonas fluorescens (strain ATCC BAA-477 / NRRL B-23932 / Pf-5).